Consider the following 294-residue polypeptide: 4-hydroxy-tetrahydrodipicolinate synthase (294 aa).

Thr47 lines the pyruvate pocket. Tyr135 functions as the Proton donor/acceptor in the catalytic mechanism. The active-site Schiff-base intermediate with substrate is Lys163. A pyruvate-binding site is contributed by Ile206.

It belongs to the DapA family. In terms of assembly, homodimer.

Its subcellular location is the cytoplasm. It catalyses the reaction L-aspartate 4-semialdehyde + pyruvate = (2S,4S)-4-hydroxy-2,3,4,5-tetrahydrodipicolinate + H2O + H(+). It participates in amino-acid biosynthesis; L-lysine biosynthesis via DAP pathway; (S)-tetrahydrodipicolinate from L-aspartate: step 3/4. Its function is as follows. Catalyzes the condensation of (S)-aspartate-beta-semialdehyde [(S)-ASA] and pyruvate to 4-hydroxy-tetrahydrodipicolinate (HTPA). The polypeptide is 4-hydroxy-tetrahydrodipicolinate synthase (Staphylococcus carnosus (strain TM300)).